Here is a 77-residue protein sequence, read N- to C-terminus: uncharacterized protein (77 aa).

This is an uncharacterized protein from Escherichia phage 186 (Bacteriophage 186).